The sequence spans 270 residues: Putative pyruvate, phosphate dikinase regulatory protein (270 aa).

Residue 148 to 155 (GVSRTSKT) participates in ADP binding.

This sequence belongs to the pyruvate, phosphate/water dikinase regulatory protein family. PDRP subfamily.

It catalyses the reaction N(tele)-phospho-L-histidyl/L-threonyl-[pyruvate, phosphate dikinase] + ADP = N(tele)-phospho-L-histidyl/O-phospho-L-threonyl-[pyruvate, phosphate dikinase] + AMP + H(+). The catalysed reaction is N(tele)-phospho-L-histidyl/O-phospho-L-threonyl-[pyruvate, phosphate dikinase] + phosphate + H(+) = N(tele)-phospho-L-histidyl/L-threonyl-[pyruvate, phosphate dikinase] + diphosphate. Functionally, bifunctional serine/threonine kinase and phosphorylase involved in the regulation of the pyruvate, phosphate dikinase (PPDK) by catalyzing its phosphorylation/dephosphorylation. In Bacillus cytotoxicus (strain DSM 22905 / CIP 110041 / 391-98 / NVH 391-98), this protein is Putative pyruvate, phosphate dikinase regulatory protein.